A 391-amino-acid chain; its full sequence is Alpha-2B adrenergic receptor (391 aa).

A helical transmembrane segment spans residues 1–25 (AIAAVITFLILFTIFGNALVILAVL). At 26-36 (TSRSLRAPQNL) the chain is on the cytoplasmic side. Residues 37–62 (FLVSLAAADILVATLIIPFSLANELL) form a helical membrane-spanning segment. Topologically, residues 63–72 (GYWYFRRTWC) are extracellular. Cysteine 72 and cysteine 151 are disulfide-bonded. The helical transmembrane segment at 73-95 (EVYLALDVLFCTSSIVHLCAISL) threads the bilayer. Topologically, residues 96-117 (DRYWAVSRALEYNSKRTPRRIK) are cytoplasmic. A helical membrane pass occupies residues 118–140 (CIILTVWLIAAVISLPPLIYKGD). At 141–156 (QGPQPRGRPQCKLNQE) the chain is on the extracellular side. A helical membrane pass occupies residues 157-180 (AWYILASSIGSFFAPCLIMILVYL). Residues 181 to 355 (RIYLIAKRSH…LTREKRFTFV (175 aa)) are Cytoplasmic-facing. 2 disordered regions span residues 194–218 (PRAKGAPGKGESKQTGQASLGAPSS) and 233–312 (EANR…PLQQ). The segment covering 233–247 (EANRHSKSTGEKVEG) has biased composition (basic and acidic residues). Pro residues predominate over residues 256–266 (PGVPPSWPPLP). Residues 271–281 (GQEEDIYRASP) show a composition bias toward basic and acidic residues. The span at 282 to 294 (EEEAGDDEEEECE) shows a compositional bias: acidic residues. Positions 295 to 309 (PQAVPVSPASACSPP) are enriched in low complexity. A helical membrane pass occupies residues 356–379 (LAVVIGVFVLCWFPFFFSYSLGAI). Topologically, residues 380-388 (CPQHCKVPH) are extracellular. Residues 389-391 (GLF) form a helical membrane-spanning segment.

It belongs to the G-protein coupled receptor 1 family. Adrenergic receptor subfamily. ADRA2B sub-subfamily. Interacts with RAB26. Interacts with PPP1R9B. Interacts with GGA1, GGA2 and GGA3.

The protein localises to the cell membrane. Alpha-2 adrenergic receptors mediate the catecholamine-induced inhibition of adenylate cyclase through the action of G proteins. In Erinaceus europaeus (Western European hedgehog), this protein is Alpha-2B adrenergic receptor (ADRA2B).